Here is a 350-residue protein sequence, read N- to C-terminus: N-acetyl-gamma-glutamyl-phosphate reductase (350 aa).

The active site involves Cys-154.

It belongs to the NAGSA dehydrogenase family. Type 1 subfamily.

Its subcellular location is the cytoplasm. The enzyme catalyses N-acetyl-L-glutamate 5-semialdehyde + phosphate + NADP(+) = N-acetyl-L-glutamyl 5-phosphate + NADPH + H(+). It functions in the pathway amino-acid biosynthesis; L-arginine biosynthesis; N(2)-acetyl-L-ornithine from L-glutamate: step 3/4. Its function is as follows. Catalyzes the NADPH-dependent reduction of N-acetyl-5-glutamyl phosphate to yield N-acetyl-L-glutamate 5-semialdehyde. The protein is N-acetyl-gamma-glutamyl-phosphate reductase of Corynebacterium efficiens (strain DSM 44549 / YS-314 / AJ 12310 / JCM 11189 / NBRC 100395).